The chain runs to 334 residues: Catabolite repressor/activator (334 aa).

Residues 1 to 58 (MKLDEIARLAGVSRTTASYVINGKAKQYRVSDKTVEKVMAVVREHNYHPNAVAAGLRA) form the HTH lacI-type domain. The H-T-H motif DNA-binding region spans 3 to 22 (LDEIARLAGVSRTTASYVIN).

Homotetramer.

Global transcriptional regulator, which plays an important role in the regulation of carbon metabolism. The polypeptide is Catabolite repressor/activator (cra) (Salmonella typhimurium (strain LT2 / SGSC1412 / ATCC 700720)).